A 206-amino-acid chain; its full sequence is Ribosomal RNA large subunit methyltransferase E (206 aa).

Residues G63, W65, D83, D99, and D124 each contribute to the S-adenosyl-L-methionine site. Catalysis depends on K164, which acts as the Proton acceptor.

The protein belongs to the class I-like SAM-binding methyltransferase superfamily. RNA methyltransferase RlmE family.

Its subcellular location is the cytoplasm. The catalysed reaction is uridine(2552) in 23S rRNA + S-adenosyl-L-methionine = 2'-O-methyluridine(2552) in 23S rRNA + S-adenosyl-L-homocysteine + H(+). In terms of biological role, specifically methylates the uridine in position 2552 of 23S rRNA at the 2'-O position of the ribose in the fully assembled 50S ribosomal subunit. The chain is Ribosomal RNA large subunit methyltransferase E from Buchnera aphidicola subsp. Acyrthosiphon pisum (strain APS) (Acyrthosiphon pisum symbiotic bacterium).